The primary structure comprises 265 residues: Zinc import ATP-binding protein ZnuC (265 aa).

The 216-residue stretch at 6-221 folds into the ABC transporter domain; the sequence is IRLEQVAVTL…PAFVELFGKN (216 aa). 38–45 contributes to the ATP binding site; that stretch reads GPNGAGKT. Positions 245 to 265 are disordered; that stretch reads DAPATSSHTHTHVHGDHCKHG.

It belongs to the ABC transporter superfamily. Zinc importer (TC 3.A.1.15.5) family. As to quaternary structure, the complex is composed of two ATP-binding proteins (ZnuC), two transmembrane proteins (ZnuB) and a solute-binding protein (ZnuA).

Its subcellular location is the cell inner membrane. It catalyses the reaction Zn(2+)(out) + ATP(in) + H2O(in) = Zn(2+)(in) + ADP(in) + phosphate(in) + H(+)(in). Its function is as follows. Part of the ABC transporter complex ZnuABC involved in zinc import. Responsible for energy coupling to the transport system. The sequence is that of Zinc import ATP-binding protein ZnuC from Pseudomonas savastanoi pv. phaseolicola (strain 1448A / Race 6) (Pseudomonas syringae pv. phaseolicola (strain 1448A / Race 6)).